The primary structure comprises 469 residues: Serine carboxypeptidase-like 41 (469 aa).

The first 20 residues, 1–20 (MAIVSLRDVAMVMVTVQVFA), serve as a signal peptide directing secretion. Disulfide bonds link C83–C342, C243–C260, and C285–C310. Residue N134 is glycosylated (N-linked (GlcNAc...) asparagine). The active site involves S175. N255 carries N-linked (GlcNAc...) asparagine glycosylation. 2 N-linked (GlcNAc...) asparagine glycosylation sites follow: N331 and N347. Residues D379 and H436 contribute to the active site. N-linked (GlcNAc...) asparagine glycosylation occurs at N461.

This sequence belongs to the peptidase S10 family. As to expression, expressed in flowers.

The protein localises to the secreted. In terms of biological role, probable carboxypeptidase. This Arabidopsis thaliana (Mouse-ear cress) protein is Serine carboxypeptidase-like 41 (SCPL41).